Reading from the N-terminus, the 204-residue chain is Peptide deformylase (204 aa).

Fe cation-binding residues include Cys-131 and His-174. Glu-175 is an active-site residue. Residue His-178 participates in Fe cation binding.

It belongs to the polypeptide deformylase family. Fe(2+) is required as a cofactor.

The enzyme catalyses N-terminal N-formyl-L-methionyl-[peptide] + H2O = N-terminal L-methionyl-[peptide] + formate. Functionally, removes the formyl group from the N-terminal Met of newly synthesized proteins. Requires at least a dipeptide for an efficient rate of reaction. N-terminal L-methionine is a prerequisite for activity but the enzyme has broad specificity at other positions. The polypeptide is Peptide deformylase (Streptococcus pyogenes serotype M18 (strain MGAS8232)).